The primary structure comprises 620 residues: Glutathione-regulated potassium-efflux system protein KefC (620 aa).

Residues 1–3 (MDS) lie on the Periplasmic side of the membrane. Residues 4–24 (HTLLQALIYLGSAALIVPIAV) form a helical membrane-spanning segment. Position 25 (Arg-25) is a topological domain, cytoplasmic. Residues 26-46 (LGLGSVLGYLIAGCIIGPWGL) form a helical membrane-spanning segment. At 47-53 (RLVTDAE) the chain is on the periplasmic side. A helical membrane pass occupies residues 54–74 (SILHFAEIGVVLMLFVIGLEL). At 75–89 (DPQRLWKLRASVFGG) the chain is on the cytoplasmic side. The chain crosses the membrane as a helical span at residues 90 to 110 (GALQMGVCGGLIGLFCMFLGL). Topologically, residues 111 to 113 (RWQ) are periplasmic. Residues 114–134 (VAELIGMTLALSSTAIAMQAM) form a helical membrane-spanning segment. Over 135–148 (NERNLTVSQVGRSA) the chain is Cytoplasmic. The chain crosses the membrane as a helical span at residues 149-169 (FAVLLFQDIAAIPLVAMIPLL). Residues 170–177 (AASGASTT) are Periplasmic-facing. The helical transmembrane segment at 178–198 (LGAFALSALKVAGALALVVLL) threads the bilayer. Over 199–213 (GRYVTRPALRFVARS) the chain is Cytoplasmic. The helical transmembrane segment at 214 to 233 (GLREVFSAVALFLVFGFGLL) threads the bilayer. At 234 to 236 (LEE) the chain is on the periplasmic side. Residues 237–254 (VGLSMAMGAFLAGVLLAS) traverse the membrane as a helical segment. At 255–269 (SEYRHALESDIEPFK) the chain is on the cytoplasmic side. A helical transmembrane segment spans residues 270-290 (GLLLGLFFIGVGMSIDFGTLV). Residues 291 to 293 (ENP) lie on the Periplasmic side of the membrane. A helical membrane pass occupies residues 294–314 (LRILLLLAGFLAIKIVMLWLV). At 315–326 (ARPLGVPAKQRR) the chain is on the cytoplasmic side. The helical transmembrane segment at 327–347 (WFAVLLGQGSEFAFVVFGAAQ) threads the bilayer. The Periplasmic segment spans residues 348 to 358 (MADVLEPEWAK). A helical transmembrane segment spans residues 359-379 (ALTLAVALSMAATPIFLVLLT). Topologically, residues 380–620 (RMEKTATGEA…ADEPEVKPSI (241 aa)) are cytoplasmic. An RCK N-terminal domain is found at 399 to 518 (QPRVIVAGFG…AGVAMPERET (120 aa)). Residues 599–620 (QGTAEGKHSGEVADEPEVKPSI) are disordered.

The protein belongs to the monovalent cation:proton antiporter 2 (CPA2) transporter (TC 2.A.37) family. KefC subfamily. As to quaternary structure, homodimer. Interacts with the regulatory subunit KefF.

The protein localises to the cell inner membrane. Pore-forming subunit of a potassium efflux system that confers protection against electrophiles. Catalyzes K(+)/H(+) antiport. The sequence is that of Glutathione-regulated potassium-efflux system protein KefC from Salmonella typhimurium (strain LT2 / SGSC1412 / ATCC 700720).